Here is a 322-residue protein sequence, read N- to C-terminus: Methionyl-tRNA formyltransferase (322 aa).

(6S)-5,6,7,8-tetrahydrofolate is bound at residue 113–116 (SLLP).

It belongs to the Fmt family.

It carries out the reaction L-methionyl-tRNA(fMet) + (6R)-10-formyltetrahydrofolate = N-formyl-L-methionyl-tRNA(fMet) + (6S)-5,6,7,8-tetrahydrofolate + H(+). Attaches a formyl group to the free amino group of methionyl-tRNA(fMet). The formyl group appears to play a dual role in the initiator identity of N-formylmethionyl-tRNA by promoting its recognition by IF2 and preventing the misappropriation of this tRNA by the elongation apparatus. The sequence is that of Methionyl-tRNA formyltransferase from Bacteroides thetaiotaomicron (strain ATCC 29148 / DSM 2079 / JCM 5827 / CCUG 10774 / NCTC 10582 / VPI-5482 / E50).